The following is a 61-amino-acid chain: UPF0434 protein Pput_3813 (61 aa).

Belongs to the UPF0434 family.

The sequence is that of UPF0434 protein Pput_3813 from Pseudomonas putida (strain ATCC 700007 / DSM 6899 / JCM 31910 / BCRC 17059 / LMG 24140 / F1).